A 204-amino-acid polypeptide reads, in one-letter code: Pyrrolidone-carboxylate peptidase (204 aa).

Active-site residues include glutamate 78, cysteine 141, and histidine 165.

Belongs to the peptidase C15 family. Homotetramer.

The protein resides in the cytoplasm. The enzyme catalyses Release of an N-terminal pyroglutamyl group from a polypeptide, the second amino acid generally not being Pro.. Functionally, removes 5-oxoproline from various penultimate amino acid residues except L-proline. The sequence is that of Pyrrolidone-carboxylate peptidase from Levilactobacillus brevis (strain ATCC 367 / BCRC 12310 / CIP 105137 / JCM 1170 / LMG 11437 / NCIMB 947 / NCTC 947) (Lactobacillus brevis).